We begin with the raw amino-acid sequence, 537 residues long: MAESLKKLAKSESLQALQDKVTYWVNDYNSNSCDQNLNYCIELIEQVAKVQAQLFGILTVTAQEGGNNEGVETIKCRLLPLLQTSFSSVNMGKTAESEMCATQDFQLRSKNRDNSPDQDQHQSDNESFSETQPTQVQDDLAESGKSLEGAKNGSTISLLAAEEEINQLKKQLKSLQAQEDARHKTSENRRSEALKSDHRSTKRTQDQRPQDVVSNYEKHLQNLKEEIAVLSAEKSGLQGRSARSPSPSTGTRSHRRGRSRSHSRSRSHSRSNSPCTTVAKIRSPSPNRAKMSSVARKAALLSRFSDAYSQARLDAQCLLRRCIDRAETVQRIIYIATVEAFHVAKMAFRHFKIRVRKMLTPSNVGSNTDFETAVSEYIVCHLDLYDSQSSVNDVIRAMNVNPKISFPPEVDFCLLTDFIQEICCIAFAMQSLEPPLDIAFGADGEIFNDCKYRRSYDSDFTAPLVFYHVWPALMENDCVIMKGEAVTKRGAFWSSVRPVMRCRSRSLSPICPRNHFGISTVSRSRSPSPIRCTFARY.

The segment at 1-270 (MAESLKKLAK…SHSRSRSHSR (270 aa)) is interaction with YWHAG/14-3-3 protein gamma. Serine 13, serine 85, serine 123, serine 127, serine 154, and serine 157 each carry phosphoserine. Positions 109–150 (SKNRDNSPDQDQHQSDNESFSETQPTQVQDDLAESGKSLEGA) are disordered. Basic and acidic residues predominate over residues 110 to 124 (KNRDNSPDQDQHQSD). Positions 125–137 (NESFSETQPTQVQ) are enriched in polar residues. Coiled coils occupy residues 152–184 (NGST…ARHK) and 210–243 (QDVV…RSAR). Disordered stretches follow at residues 171–212 (QLKS…PQDV) and 233–291 (EKSG…RAKM). Over residues 179–209 (EDARHKTSENRRSEALKSDHRSTKRTQDQRP) the composition is skewed to basic and acidic residues. A compositionally biased stretch (low complexity) spans 239–251 (GRSARSPSPSTGT). A compositionally biased stretch (basic residues) spans 252–269 (RSHRRGRSRSHSRSRSHS). A phosphoserine mark is found at serine 283, serine 285, and serine 508.

It belongs to the MIEAP family. As to quaternary structure, interacts (via coiled-coil domains) with BNIP3L (via BH3 domain). Interacts (via coiled-coil domains) with BNIP3 (via BH3 domain). Interacts with YWHAG/14-3-3 protein gamma; a protein that also plays a role in MALM. In terms of tissue distribution, in testis, expressed primarily in spermatids.

Its subcellular location is the cytoplasm. It localises to the cytosol. The protein resides in the mitochondrion outer membrane. The protein localises to the mitochondrion matrix. Its function is as follows. Key regulator of mitochondrial quality that mediates the repairing or degradation of unhealthy mitochondria in response to mitochondrial damage. Mediator of mitochondrial protein catabolic process (also named MALM) by mediating the degradation of damaged proteins inside mitochondria by promoting the accumulation in the mitochondrial matrix of hydrolases that are characteristic of the lysosomal lumen. Also involved in mitochondrion degradation of damaged mitochondria by promoting the formation of vacuole-like structures (named MIV), which engulf and degrade unhealthy mitochondria by accumulating lysosomes. The physical interaction of SPATA18/MIEAP, BNIP3 and BNIP3L/NIX at the mitochondrial outer membrane regulates the opening of a pore in the mitochondrial double membrane in order to mediate the translocation of lysosomal proteins from the cytoplasm to the mitochondrial matrix. Binds cardiolipin. May form molecular condensates (non-membrane-bounded organelles) within mitochondria that compartmentalize and promote cardiolipin metabolism. The protein is Mitochondria-eating protein (Spata18) of Mus musculus (Mouse).